We begin with the raw amino-acid sequence, 123 residues long: Small ribosomal subunit protein uS12 (123 aa).

Residue D89 is modified to 3-methylthioaspartic acid.

Belongs to the universal ribosomal protein uS12 family. As to quaternary structure, part of the 30S ribosomal subunit. Contacts proteins S8 and S17. May interact with IF1 in the 30S initiation complex.

With S4 and S5 plays an important role in translational accuracy. In terms of biological role, interacts with and stabilizes bases of the 16S rRNA that are involved in tRNA selection in the A site and with the mRNA backbone. Located at the interface of the 30S and 50S subunits, it traverses the body of the 30S subunit contacting proteins on the other side and probably holding the rRNA structure together. The combined cluster of proteins S8, S12 and S17 appears to hold together the shoulder and platform of the 30S subunit. This chain is Small ribosomal subunit protein uS12, found in Citrifermentans bemidjiense (strain ATCC BAA-1014 / DSM 16622 / JCM 12645 / Bem) (Geobacter bemidjiensis).